Here is a 946-residue protein sequence, read N- to C-terminus: Villin-4 (946 aa).

Gelsolin-like repeat units lie at residues 28-109 (NFKP…ETEK), 152-219 (VHVK…EDGK), 274-339 (LEHE…TIMF), and 641-715 (EIHH…PQFF). Disordered regions lie at residues 744–783 (ATPSLDKPKRRTPAFSGRNAGQDKSQQRTRSMSHSPERHR) and 846–902 (TKST…PAPD). Polar residues predominate over residues 765 to 777 (QDKSQQRTRSMSH). The span at 874 to 883 (SENEPEDDEN) shows a compositional bias: acidic residues. The HP domain occupies 881 to 946 (DENSTIYPYE…NRLKSDLQLF (66 aa)).

This sequence belongs to the villin/gelsolin family.

It is found in the cytoplasm. The protein resides in the cytoskeleton. Its function is as follows. Ca(2+)-regulated actin-binding protein. Binds actin microfilaments (MFs). Involved in actin filament bundling, severing and capping. Caps the barbed end of actin filaments and is able to sever them in a calcium-dependent manner. This is Villin-4 from Oryza sativa subsp. indica (Rice).